Reading from the N-terminus, the 435-residue chain is 3-phosphoshikimate 1-carboxyvinyltransferase (435 aa).

3 residues coordinate 3-phosphoshikimate: lysine 15, serine 16, and arginine 20. Residue lysine 15 participates in phosphoenolpyruvate binding. Phosphoenolpyruvate is bound by residues glycine 96 and arginine 124. 3-phosphoshikimate is bound by residues serine 169, glutamine 171, serine 195, aspartate 319, and lysine 346. Glutamine 171 is a phosphoenolpyruvate binding site. Aspartate 319 (proton acceptor) is an active-site residue. Residues arginine 350 and arginine 395 each contribute to the phosphoenolpyruvate site.

The protein belongs to the EPSP synthase family. As to quaternary structure, monomer.

The protein localises to the cytoplasm. The enzyme catalyses 3-phosphoshikimate + phosphoenolpyruvate = 5-O-(1-carboxyvinyl)-3-phosphoshikimate + phosphate. It participates in metabolic intermediate biosynthesis; chorismate biosynthesis; chorismate from D-erythrose 4-phosphate and phosphoenolpyruvate: step 6/7. Catalyzes the transfer of the enolpyruvyl moiety of phosphoenolpyruvate (PEP) to the 5-hydroxyl of shikimate-3-phosphate (S3P) to produce enolpyruvyl shikimate-3-phosphate and inorganic phosphate. This chain is 3-phosphoshikimate 1-carboxyvinyltransferase, found in Chlorobium phaeobacteroides (strain BS1).